Consider the following 264-residue polypeptide: Phosphonoacetaldehyde hydrolase (264 aa).

The active-site Nucleophile is the Asp9. The Mg(2+) site is built by Asp9 and Ala11. Lys50 acts as the Schiff-base intermediate with substrate in catalysis. Asp183 is a binding site for Mg(2+).

This sequence belongs to the HAD-like hydrolase superfamily. PhnX family. Homodimer. Mg(2+) serves as cofactor.

The enzyme catalyses phosphonoacetaldehyde + H2O = acetaldehyde + phosphate + H(+). Its function is as follows. Involved in phosphonate degradation. The polypeptide is Phosphonoacetaldehyde hydrolase (Bacillus anthracis).